The chain runs to 418 residues: STE20-related kinase adapter protein beta (418 aa).

One can recognise a Protein kinase domain in the interval 58 to 369 (YELQVEIGRG…ASSLLSHVFF (312 aa)). ATP contacts are provided by residues 64–72 (IGRGFDNLT) and Lys-89.

Belongs to the protein kinase superfamily. STE Ser/Thr protein kinase family. STE20 subfamily. Component of a trimeric complex composed of STK11/LKB1, STRAD (STRADA or STRADB) and CAB39/MO25 (CAB39/MO25alpha or CAB39L/MO25beta): the complex tethers STK11/LKB1 in the cytoplasm and stimulates its catalytic activity. Interacts with BIRC4/XIAP. These two proteins are likely to coexist in a complex with TAK1, TRAF6, TAB1 and TAB2. As to expression, highly expressed in heart, skeletal muscle, testis, liver and colon.

It localises to the nucleus. Its subcellular location is the cytoplasm. Functionally, pseudokinase which, in complex with CAB39/MO25 (CAB39/MO25alpha or CAB39L/MO25beta), binds to and activates STK11/LKB1. Adopts a closed conformation typical of active protein kinases and binds STK11/LKB1 as a pseudosubstrate, promoting conformational change of STK11/LKB1 in an active conformation. In Homo sapiens (Human), this protein is STE20-related kinase adapter protein beta (STRADB).